Consider the following 97-residue polypeptide: Small ribosomal subunit protein bS20 (97 aa).

The protein belongs to the bacterial ribosomal protein bS20 family.

Binds directly to 16S ribosomal RNA. This Prochlorococcus marinus subsp. pastoris (strain CCMP1986 / NIES-2087 / MED4) protein is Small ribosomal subunit protein bS20.